Reading from the N-terminus, the 126-residue chain is Protein C10 (126 aa).

Position 2 is an N-acetylalanine (A2).

This sequence belongs to the UPF0456 family. As to expression, ubiquitously expressed, with higher expression in lung and fetal brain.

Its subcellular location is the cytoplasm. Functionally, in brain, may be required for corpus callosum development. In Homo sapiens (Human), this protein is Protein C10 (C12orf57).